The sequence spans 285 residues: Pantothenate synthetase (285 aa).

30 to 37 (MGNLHRGH) lines the ATP pocket. H37 (proton donor) is an active-site residue. Position 61 (Q61) interacts with (R)-pantoate. Q61 serves as a coordination point for beta-alanine. 149 to 152 (GRKD) contributes to the ATP binding site. Residue Q155 coordinates (R)-pantoate. ATP contacts are provided by residues V178 and 186–189 (LSSR).

Belongs to the pantothenate synthetase family. In terms of assembly, homodimer.

The protein localises to the cytoplasm. The catalysed reaction is (R)-pantoate + beta-alanine + ATP = (R)-pantothenate + AMP + diphosphate + H(+). Its pathway is cofactor biosynthesis; (R)-pantothenate biosynthesis; (R)-pantothenate from (R)-pantoate and beta-alanine: step 1/1. Catalyzes the condensation of pantoate with beta-alanine in an ATP-dependent reaction via a pantoyl-adenylate intermediate. The polypeptide is Pantothenate synthetase (Halorhodospira halophila (strain DSM 244 / SL1) (Ectothiorhodospira halophila (strain DSM 244 / SL1))).